The primary structure comprises 85 residues: MDISRAEQRILHILAQGGCIQVEKDEDGRIAEISCVTRDGWHLPGLDLALFRKVKRKGAIASTNGGPYRITRRGLQLVRSQTDNR.

The protein belongs to the UPF0386 family.

In Chelativorans sp. (strain BNC1), this protein is UPF0386 protein Meso_1721.